Reading from the N-terminus, the 328-residue chain is Phosphatidylglycerol--prolipoprotein diacylglyceryl transferase (328 aa).

The next 3 membrane-spanning stretches (helical) occupy residues 15–35 (VIQG…ILIS), 57–77 (IFMF…STLV), and 106–126 (GMAI…TINT). A 1,2-diacyl-sn-glycero-3-phospho-(1'-sn-glycerol) is bound at residue Arg-156. Transmembrane regions (helical) follow at residues 242-262 (GFIF…IEYL) and 289-309 (ISMG…WIIV).

Belongs to the Lgt family.

It localises to the cell inner membrane. The catalysed reaction is L-cysteinyl-[prolipoprotein] + a 1,2-diacyl-sn-glycero-3-phospho-(1'-sn-glycerol) = an S-1,2-diacyl-sn-glyceryl-L-cysteinyl-[prolipoprotein] + sn-glycerol 1-phosphate + H(+). The protein operates within protein modification; lipoprotein biosynthesis (diacylglyceryl transfer). Functionally, catalyzes the transfer of the diacylglyceryl group from phosphatidylglycerol to the sulfhydryl group of the N-terminal cysteine of a prolipoprotein, the first step in the formation of mature lipoproteins. This Borreliella burgdorferi (strain ZS7) (Borrelia burgdorferi) protein is Phosphatidylglycerol--prolipoprotein diacylglyceryl transferase.